A 213-amino-acid polypeptide reads, in one-letter code: Uridine kinase (213 aa).

15–22 (GGSGSGKT) is an ATP binding site.

This sequence belongs to the uridine kinase family.

It localises to the cytoplasm. It catalyses the reaction uridine + ATP = UMP + ADP + H(+). The enzyme catalyses cytidine + ATP = CMP + ADP + H(+). Its pathway is pyrimidine metabolism; CTP biosynthesis via salvage pathway; CTP from cytidine: step 1/3. It participates in pyrimidine metabolism; UMP biosynthesis via salvage pathway; UMP from uridine: step 1/1. In Ligilactobacillus salivarius (strain UCC118) (Lactobacillus salivarius), this protein is Uridine kinase.